Here is a 181-residue protein sequence, read N- to C-terminus: Germinal center-associated signaling and motility protein (181 aa).

Ser-102 carries the post-translational modification Phosphoserine. The span at 117 to 128 (AERHKESSRGTE) shows a compositional bias: basic and acidic residues. A disordered region spans residues 117–181 (AERHKESSRG…PYETHFSYPQ (65 aa)). Tyr-150 is modified (phosphotyrosine).

Interacts with ACTB and MYH2; the interaction with MYH2 is increased by IL6-induced phosphorylation. Interacts (via C-terminus) with ARHGEF11 (via DH domain). Interacts with ARHGEF12. Interacts with SYK; the interaction increases after B-cell receptor stimulation, resulting in enhanced SYK autophosphorylation and activity. Post-translationally, phosphorylation on tyrosine residues can be induced by IL6. Phosphorylation is mediated by LYN. In terms of processing, targeted by the ubiquitin E3 ligase subunit FBXO10 to mediate its ubiquitination and degradation. As to expression, highly expressed in normal germinal center (GC) B-cells. Expressed in spleen and, to a lesser extent, bone marrow.

It localises to the cytoplasm. Its subcellular location is the cell membrane. Its function is as follows. Involved in the negative regulation of lymphocyte motility. It mediates the migration-inhibitory effects of IL6. Serves as a positive regulator of the RhoA signaling pathway. Enhancement of RhoA activation results in inhibition of lymphocyte and lymphoma cell motility by activation of its downstream effector ROCK. Is a regulator of B-cell receptor signaling, that acts through SYK kinase activation. The polypeptide is Germinal center-associated signaling and motility protein (Gcsam) (Mus musculus (Mouse)).